The sequence spans 102 residues: Iron-sulfur cluster assembly protein CyaY (102 aa).

Belongs to the frataxin family.

In terms of biological role, involved in iron-sulfur (Fe-S) cluster assembly. May act as a regulator of Fe-S biogenesis. In Histophilus somni (strain 129Pt) (Haemophilus somnus), this protein is Iron-sulfur cluster assembly protein CyaY.